The chain runs to 275 residues: Peflin (275 aa).

8 tandem repeats follow at residues 21–29 (PPGGYYPGP), 31–39 (HGGGQYGSG), 41–49 (PPGGGYGAP), 50–59 (APGGPYGYPS), 60–68 (AGGVPSGTP), 76–84 (PPGGPYGQL), 85–91 (PPGGPYG), and 92–100 (TQPGHYGQG). Disordered stretches follow at residues 21–45 (PPGG…PGGG) and 59–103 (SAGG…GGVP). Positions 21 to 100 (PPGGYYPGPP…GTQPGHYGQG (80 aa)) are 8 X 9 AA approximate tandem repeat of [AP]-P-G-G-P-Y-G-G-P-P. Positions 31 to 45 (HGGGQYGSGLPPGGG) are enriched in gly residues. The span at 59–70 (SAGGVPSGTPSG) shows a compositional bias: low complexity. 5 EF-hand domains span residues 105 to 140 (NVDP…SNWS), 146 to 174 (TCLM…WKFL), 172 to 207 (KFLQ…MGYN), 208 to 244 (LSPQ…LQVL), and 245 to 274 (TEAF…ASRM). Positions 118, 120, 122, 124, and 129 each coordinate Ca(2+). 5 residues coordinate Ca(2+): Asp185, Asp187, Ser189, Ser191, and Glu196. A required for interaction with PDCD6 region spans residues 195 to 275 (TELQQALSQM…FVTMTASRML (81 aa)).

Heterodimer; heterodimerizes (via the EF-hand 5) with PDCD6. Dissociates from PDCD6 in presence of calcium. Ubiquitinated by the BCR(KLHL12) E3 ubiquitin ligase complex.

It localises to the cytoplasm. It is found in the endoplasmic reticulum. Its subcellular location is the membrane. The protein localises to the cytoplasmic vesicle. The protein resides in the COPII-coated vesicle membrane. Its function is as follows. Calcium-binding protein that acts as an adapter that bridges unrelated proteins or stabilizes weak protein-protein complexes in response to calcium. Together with PDCD6, acts as a calcium-dependent adapter for the BCR(KLHL12) complex, a complex involved in endoplasmic reticulum (ER)-Golgi transport by regulating the size of COPII coats. In response to cytosolic calcium increase, the heterodimer formed with PDCD6 interacts with, and bridges together the BCR(KLHL12) complex and SEC31 (SEC31A or SEC31B), promoting monoubiquitination of SEC31 and subsequent collagen export, which is required for neural crest specification. Its role in the heterodimer formed with PDCD6 is however unclear: some evidence shows that PEF1 and PDCD6 work together and promote association between PDCD6 and SEC31 in presence of calcium. Other reports show that PEF1 dissociates from PDCD6 in presence of calcium, and may act as a negative regulator of PDCD6. Also acts as a negative regulator of ER-Golgi transport; possibly by inhibiting interaction between PDCD6 and SEC31. This chain is Peflin, found in Mus musculus (Mouse).